Here is a 429-residue protein sequence, read N- to C-terminus: TNF receptor-associated factor family protein DDB_G0267744 (429 aa).

Residues 22 to 60 form an RING-type; degenerate zinc finger; that stretch reads CVICSHLQVDIYQCVEGHFACKNCFLKMIELKKQCMTCR. TRAF-type zinc fingers lie at residues 151-203 and 204-265; these read HHLK…GEFN and NHQD…SNSE.

The protein belongs to the TNF receptor-associated factor family.

The protein resides in the cytoplasm. Probable adapter protein and signal transducer that links members of the tumor necrosis factor receptor family to different signaling pathways by association with the receptor cytoplasmic domain and kinases. In Dictyostelium discoideum (Social amoeba), this protein is TNF receptor-associated factor family protein DDB_G0267744.